The following is a 63-amino-acid chain: Metallothionein-2 (63 aa).

This sequence belongs to the metallothionein superfamily. Type 6 family.

Functionally, this protein binds cations of several transition elements. The sequence is that of Metallothionein-2 (mtl-2) from Caenorhabditis elegans.